The following is a 574-amino-acid chain: Developmental and secondary metabolism regulator veA (574 aa).

4 disordered regions span residues 1–22 (MATR…SRIT), 39–60 (ERAR…VDPP), 255–500 (RSSD…GAGK), and 513–540 (RSYE…YPRR). The Velvet domain maps to 25 to 230 (GKKLTYKLNV…AEQGCRVRIR (206 aa)). Positions 39 to 44 (ERARAC) match the Nuclear localization signal motif. 2 stretches are compositionally biased toward pro residues: residues 314-323 (RPLPPAPGPA) and 330-341 (PAPPAPPAPPSH). Composition is skewed to polar residues over residues 343 to 353 (PGYQSHLSFGS), 385 to 394 (HARNPSTSAE), 406 to 415 (RMSTERSSYP), and 448 to 458 (VAQSAAPRSQT). A PEST region spans residues 457 to 501 (QTPSSSLVPSLPPLKALSGDYPNNLSQSSSSTSQSPSHDLGAGKK). Composition is skewed to low complexity over residues 459–474 (PSSS…KALS) and 482–493 (SQSSSSTSQSPS). A compositionally biased stretch (basic and acidic residues) spans 513-525 (RSYEDSFGHDDRP).

This sequence belongs to the velvet family. VeA subfamily. Component of the heterotrimeric velvet complex composed of laeA, veA and velB; VeA acting as a bridging protein between laeA and velB.

It localises to the nucleus. The protein resides in the cytoplasm. Functionally, component of the velvet transcription factor complex that controls sexual/asexual developmental ratio in response to light, promoting sexual development in the darkness while stimulating asexual sporulation under illumination. The velvet complex hat acts as a global regulator for secondary metabolite gene expression. Controls the expression of the penicillin gene cluster. This chain is Developmental and secondary metabolism regulator veA, found in Aspergillus oryzae (strain ATCC 42149 / RIB 40) (Yellow koji mold).